The chain runs to 305 residues: Probable lipid kinase YegS-like (305 aa).

Residues 1–129 form the DAGKc domain; that stretch reads MTQRRAMLIL…VDLGEVGGKL (129 aa). ATP-binding positions include Thr39, 65 to 71, and Thr92; that span reads GDGTLRD. The Mg(2+) site is built by Leu210, Asp213, and Leu215. Glu268 (proton acceptor) is an active-site residue.

Belongs to the diacylglycerol/lipid kinase family. YegS lipid kinase subfamily. Requires Mg(2+) as cofactor. It depends on Ca(2+) as a cofactor.

It is found in the cytoplasm. Functionally, probably phosphorylates lipids; the in vivo substrate is unknown. The protein is Probable lipid kinase YegS-like of Pseudomonas syringae pv. syringae (strain B728a).